We begin with the raw amino-acid sequence, 60 residues long: Cytotoxin 7 (60 aa).

Intrachain disulfides connect C3–C21, C14–C38, C42–C53, and C54–C59.

This sequence belongs to the three-finger toxin family. Short-chain subfamily. Type IA cytotoxin sub-subfamily. Monomer in solution; Homodimer and oligomer in the presence of negatively charged lipids forming a pore with a size ranging between 20 and 30 Angstroms. As to expression, expressed by the venom gland.

Its subcellular location is the secreted. The protein localises to the target cell membrane. In terms of biological role, shows cytolytic activity on many different cells by forming pore in lipid membranes. In vivo, increases heart rate or kills the animal by cardiac arrest. In addition, it binds to heparin with high affinity, interacts with Kv channel-interacting protein 1 (KCNIP1) in a calcium-independent manner, and binds to integrin alpha-V/beta-3 (ITGAV/ITGB3) with moderate affinity. In Naja annulifera (Banded Egyptian cobra), this protein is Cytotoxin 7.